The primary structure comprises 942 residues: Replicase polyprotein P2AB (942 aa).

2 helical membrane passes run 10-30 and 41-61; these read KSVMLMSRMSWSKLALLISVA and TLICMGILVSVVLNWIVCAVC. The region spanning 129–326 is the Peptidase S39 domain; it reads VENSRLQPLE…TVENSELYPD (198 aa). Residues His176, Asp209, and Ser276 each act as for protease activity in the active site. Phosphothreonine; by host is present on Thr339. Residue Ser390 is modified to Phosphoserine; by host. In terms of domain architecture, RdRp catalytic spans 691-805; the sequence is HPGAMADISG…GWVDDAPRKY (115 aa). The interval 888–917 is disordered; it reads GNDGEERSSNESPATTKTQGSAAAWGPPQE. A compositionally biased stretch (polar residues) spans 897–908; that stretch reads NESPATTKTQGS.

In terms of processing, the polyprotein is proteolytically cleaved into several chains by the viral protease.

The protein resides in the host membrane. The enzyme catalyses RNA(n) + a ribonucleoside 5'-triphosphate = RNA(n+1) + diphosphate. In terms of biological role, responsible for cleavage of polyprotein P2A and replicase polyprotein P2AB. Covalently attached to the 5' extremity of the genomic and subgenomic RNAs. It may serve as a primer for the replicase. Functionally, replicates the viral genome. In Dactylis glomerata (Orchard grass), this protein is Replicase polyprotein P2AB.